Here is a 462-residue protein sequence, read N- to C-terminus: Nucleolar protein 12 (462 aa).

Disordered stretches follow at residues 24 to 148 (LFSK…ESES) and 191 to 215 (KDPRSENDDHDDGEEDEEEEESKTK). The segment covering 47 to 59 (PEQDKDEQEEENV) has biased composition (acidic residues). Over residues 108–124 (GDSKSKDEPKDEPKDDS) the composition is skewed to basic and acidic residues. Over residues 125–134 (SDSDNEDEAT) the composition is skewed to acidic residues. Polar residues predominate over residues 137–146 (DKSSITGTES). Residues 198 to 211 (DDHDDGEEDEEEEE) show a composition bias toward acidic residues. The RRM domain occupies 297-378 (RSVFVGNLDF…RKLRISRCKN (82 aa)). Disordered regions lie at residues 381–400 (KAQGNQSSLQNNKLNDQQRT) and 432–462 (ETTPVLKRTKNRSKTGRVTKRSIAFKKQNAQ). Positions 383-397 (QGNQSSLQNNKLNDQ) are enriched in polar residues. Positions 438–455 (KRTKNRSKTGRVTKRSIA) are enriched in basic residues.

This sequence belongs to the RRM RBM34 family.

It is found in the nucleus. The protein localises to the nucleolus. Involved in pre-25S rRNA processing. In Kluyveromyces lactis (strain ATCC 8585 / CBS 2359 / DSM 70799 / NBRC 1267 / NRRL Y-1140 / WM37) (Yeast), this protein is Nucleolar protein 12 (NOP12).